Consider the following 197-residue polypeptide: Small ribosomal subunit protein uS4B (197 aa).

The 64-residue stretch at cysteine 88–phenylalanine 151 folds into the S4 RNA-binding domain.

The protein belongs to the universal ribosomal protein uS4 family. As to quaternary structure, part of the 30S ribosomal subunit. Contacts protein S5. The interaction surface between S4 and S5 is involved in control of translational fidelity.

In terms of biological role, one of the primary rRNA binding proteins, it binds directly to 16S rRNA where it nucleates assembly of the body of the 30S subunit. With S5 and S12 plays an important role in translational accuracy. The chain is Small ribosomal subunit protein uS4B from Clostridium botulinum (strain Hall / ATCC 3502 / NCTC 13319 / Type A).